The chain runs to 303 residues: Protoheme IX farnesyltransferase 1 (303 aa).

A run of 9 helical transmembrane segments spans residues 18–38 (PGII…AAQG), 42–62 (LTLM…GCAV), 91–111 (AVLS…AIFT), 114–134 (LAVL…SLYM), 139–159 (VYGT…GYCA), 169–189 (VILL…IAIF), 213–233 (LHIV…PLAG), 235–255 (TGIA…AMAL), and 274–294 (FSII…QVVA).

The protein belongs to the UbiA prenyltransferase family. Protoheme IX farnesyltransferase subfamily.

It is found in the cell inner membrane. It catalyses the reaction heme b + (2E,6E)-farnesyl diphosphate + H2O = Fe(II)-heme o + diphosphate. The protein operates within porphyrin-containing compound metabolism; heme O biosynthesis; heme O from protoheme: step 1/1. Its function is as follows. Converts heme B (protoheme IX) to heme O by substitution of the vinyl group on carbon 2 of heme B porphyrin ring with a hydroxyethyl farnesyl side group. The protein is Protoheme IX farnesyltransferase 1 of Shewanella frigidimarina (strain NCIMB 400).